The chain runs to 476 residues: Oogenesin-2 (476 aa).

An LRR 1; degenerate repeat occupies 97–121 (RCKLREITLSHDLVVVWAGSHEVEG). One copy of the LRR 2; degenerate repeat lies at 176-200 (HLHCRKLKIYGLTKAAVIEMFKIVH). The stretch at 201–226 (AEYIEDLELSCLCLEYLDFLNPYLKQ) is one LRR 3; degenerate repeat. Residues 227–264 (MSNLLSLTLDEIIYTLNIDDYRNLNEEKVITVISHLPT) form an LRR 4; degenerate repeat. LRR repeat units follow at residues 265-285 (FHHLQELYVHGVIFIECLRCL), 286-317 (KKPLEVLSFTDCDLSQSDLDYLPYCLNIFELR), 342-369 (RHTLKSLQLMSCEMGETHFNALLPALSQ), and 370-394 (CYQLTVVNFYGNELSLLFLKKLLHH).

It belongs to the PRAME family. Expressed in ovary, specifically in oocytes. Detected in follicles with two layers of granulosa cells, and are present in early as well as large antral follicles.

This Mus musculus (Mouse) protein is Oogenesin-2.